The following is a 967-amino-acid chain: RNA polymerase-associated protein RapA (967 aa).

In terms of domain architecture, Helicase ATP-binding spans 163 to 333 (EVGQRHAPRV…FARLRLLDPN (171 aa)). 176–183 (DEVGLGKT) contacts ATP. Positions 279 to 282 (DEAH) match the DEAH box motif. The Helicase C-terminal domain maps to 489-643 (RVEWLLNYLT…TCPTGRTIYD (155 aa)).

The protein belongs to the SNF2/RAD54 helicase family. RapA subfamily. As to quaternary structure, interacts with the RNAP. Has a higher affinity for the core RNAP than for the holoenzyme. Its ATPase activity is stimulated by binding to RNAP.

Its function is as follows. Transcription regulator that activates transcription by stimulating RNA polymerase (RNAP) recycling in case of stress conditions such as supercoiled DNA or high salt concentrations. Probably acts by releasing the RNAP, when it is trapped or immobilized on tightly supercoiled DNA. Does not activate transcription on linear DNA. Probably not involved in DNA repair. The chain is RNA polymerase-associated protein RapA from Pectobacterium carotovorum subsp. carotovorum (strain PC1).